The sequence spans 481 residues: UDP-glycosyltransferase 72B3 (481 aa).

Residues Ser-277, 347 to 349 (APQ), 364 to 372 (HCGWNSSLE), and 386 to 389 (YAEQ) each bind UDP-alpha-D-glucose.

Belongs to the UDP-glycosyltransferase family.

Functionally, possesses low quercetin 3-O-glucosyltransferase activity in vitro. This chain is UDP-glycosyltransferase 72B3 (UGT72B3), found in Arabidopsis thaliana (Mouse-ear cress).